The sequence spans 278 residues: Potassium/proton antiporter CemA (278 aa).

The next 4 membrane-spanning stretches (helical) occupy residues 61–81 (LIVLVVFPVVVHQVSKNFIIG), 155–175 (AIKNILADSISISVFILLIVL), 203–223 (IILFTDMFIGFHSPHGWEVVI), and 238–258 (FIFLFIATFPVSLDTVFKYWI).

It belongs to the CemA family.

The protein resides in the plastid. It is found in the chloroplast inner membrane. The enzyme catalyses K(+)(in) + H(+)(out) = K(+)(out) + H(+)(in). Functionally, contributes to K(+)/H(+) antiport activity by supporting proton efflux to control proton extrusion and homeostasis in chloroplasts in a light-dependent manner to modulate photosynthesis. Prevents excessive induction of non-photochemical quenching (NPQ) under continuous-light conditions. Indirectly promotes efficient inorganic carbon uptake into chloroplasts. The chain is Potassium/proton antiporter CemA from Cyanidium caldarium (Red alga).